Here is a 342-residue protein sequence, read N- to C-terminus: Nicotinate-nucleotide--dimethylbenzimidazole phosphoribosyltransferase (342 aa).

Glu-311 functions as the Proton acceptor in the catalytic mechanism.

The protein belongs to the CobT family.

It catalyses the reaction 5,6-dimethylbenzimidazole + nicotinate beta-D-ribonucleotide = alpha-ribazole 5'-phosphate + nicotinate + H(+). Its pathway is nucleoside biosynthesis; alpha-ribazole biosynthesis; alpha-ribazole from 5,6-dimethylbenzimidazole: step 1/2. In terms of biological role, catalyzes the synthesis of alpha-ribazole-5'-phosphate from nicotinate mononucleotide (NAMN) and 5,6-dimethylbenzimidazole (DMB). This is Nicotinate-nucleotide--dimethylbenzimidazole phosphoribosyltransferase from Vibrio atlanticus (strain LGP32) (Vibrio splendidus (strain Mel32)).